Reading from the N-terminus, the 315-residue chain is WD repeat domain-containing protein 83 (315 aa).

WD repeat units follow at residues 23–62 (CGQG…LLRT), 65–104 (GHGY…VVRK), 107–146 (GHAG…PEPV), 151–188 (EARD…LFSD), 190–228 (VGSP…LLGE), 231–272 (GHKN…LALA), and 275–313 (VGSG…AEDG).

The protein belongs to the WD repeat MORG1 family. Interacts with EGLN3/PHD3. Interacts with ERK signaling proteins MAP2K1/MEK1, MAP2K2/MEK2, LAMTOR3, ARAF/Raf-1, MAPK1/ERK2 and MAPK3/ERK1. Identified in the spliceosome C complex. Interacts with PARD6B and CRB3. Interacts strongly with GTP-bound RRAGA but not with inactive GDP-bound. Interacts with p62/SQSTM1.

It is found in the cytoplasm. It localises to the lysosome. Its subcellular location is the nucleus. Its function is as follows. Molecular scaffold protein for various multimeric protein complexes. Acts as a module in the assembly of a multicomponent scaffold for the ERK pathway, linking ERK responses to specific agonists. At low concentrations it enhances ERK activation, whereas high concentrations lead to the inhibition of ERK activation. Also involved in response to hypoxia by acting as a negative regulator of HIF1A/HIF-1-alpha via its interaction with EGLN3/PHD3. May promote degradation of HIF1A. May act by recruiting signaling complexes to a specific upstream activator. May also be involved in pre-mRNA splicing. Participates in tight junction development by regulating apico-basal polarity, a key step in tissue development and organization. Mechanistically, regulates the translocation of PAR6-aPKC from the cytoplasm to the apical surface by acting as an adapter between PARD6B AND CRB3. Also acts as a negative regulator of mTORC1 under nutrient-rich conditions by binding to the active Rag GTPases to inhibit mTORC1 localization to the lysosome and phosphorylation of downstream targets. This facilitates constitutive basal autophagy during nutrient availability. The sequence is that of WD repeat domain-containing protein 83 (WDR83) from Homo sapiens (Human).